We begin with the raw amino-acid sequence, 151 residues long: 3-dehydroquinate dehydratase (151 aa).

Tyrosine 26 serves as the catalytic Proton acceptor. Substrate-binding residues include asparagine 75, histidine 81, and aspartate 88. Histidine 101 functions as the Proton donor in the catalytic mechanism. Residues 102–103 (LS) and arginine 112 each bind substrate.

It belongs to the type-II 3-dehydroquinase family. In terms of assembly, homododecamer.

The enzyme catalyses 3-dehydroquinate = 3-dehydroshikimate + H2O. It participates in metabolic intermediate biosynthesis; chorismate biosynthesis; chorismate from D-erythrose 4-phosphate and phosphoenolpyruvate: step 3/7. In terms of biological role, catalyzes a trans-dehydration via an enolate intermediate. This chain is 3-dehydroquinate dehydratase, found in Shewanella denitrificans (strain OS217 / ATCC BAA-1090 / DSM 15013).